A 156-amino-acid polypeptide reads, in one-letter code: Large ribosomal subunit protein uL15 (156 aa).

Basic and acidic residues predominate over residues 1–11; it reads MKLNDLRDKPG. Residues 1–44 form a disordered region; sequence MKLNDLRDKPGSVKARKRVGRGIGSGTGKTGGRGVKGQKSRSGV. Gly residues predominate over residues 21–35; sequence RGIGSGTGKTGGRGV.

Belongs to the universal ribosomal protein uL15 family. In terms of assembly, part of the 50S ribosomal subunit.

Binds to the 23S rRNA. This Brucella abortus (strain S19) protein is Large ribosomal subunit protein uL15.